Consider the following 678-residue polypeptide: NADPH--cytochrome P450 reductase (678 aa).

An N-acetylglycine modification is found at Gly-2. Topologically, residues 2–22 (GDSHEDTSATVPEAVAEEVSL) are lumenal. Residues 23–43 (FSTTDIVLFSLIVGVLTYWFI) traverse the membrane as a helical segment. The Cytoplasmic portion of the chain corresponds to 44–678 (FKKKKEEIPE…KGRYSLDVWS (635 aa)). A Flavodoxin-like domain is found at 80-224 (IIVFYGSQTG…DFITWREQFW (145 aa)). FMN is bound by residues 86 to 91 (SQTGTA), 138 to 141 (ATYG), 173 to 182 (LGNKTYEHFN), and Asp-208. The region spanning 279 to 521 (KNPFLAAVTT…FVRKSQFRLP (243 aa)) is the FAD-binding FR-type domain. Residue Arg-298 participates in NADP(+) binding. FAD contacts are provided by residues Arg-424, 454–457 (RYYS), 472–474 (CAV), Tyr-478, and 488–491 (GVAT). Residues Thr-535, 596–597 (SR), 602–606 (KVYVQ), and Asp-639 each bind NADP(+). Position 677 (Trp-677) interacts with FAD.

This sequence belongs to the NADPH--cytochrome P450 reductase family. The protein in the N-terminal section; belongs to the flavodoxin family. In the C-terminal section; belongs to the flavoprotein pyridine nucleotide cytochrome reductase family. FAD serves as cofactor. The cofactor is FMN.

It localises to the endoplasmic reticulum membrane. It catalyses the reaction 2 oxidized [cytochrome P450] + NADPH = 2 reduced [cytochrome P450] + NADP(+) + H(+). In terms of biological role, this enzyme is required for electron transfer from NADP to cytochrome P450 in microsomes. It can also provide electron transfer to heme oxygenase and cytochrome B5. This is NADPH--cytochrome P450 reductase from Mus musculus (Mouse).